We begin with the raw amino-acid sequence, 503 residues long: Trehalose-6-phosphate synthase (503 aa).

Arg22 is a binding site for D-glucose 6-phosphate. A UDP-alpha-D-glucose-binding site is contributed by 42–43 (GG). D-glucose 6-phosphate is bound by residues Tyr94 and Asp148. Positions 290 and 295 each coordinate UDP-alpha-D-glucose. A D-glucose 6-phosphate-binding site is contributed by Arg328. UDP-alpha-D-glucose is bound at residue 393–397 (LVAKE). The segment at 481-503 (GETGDSGVTGESTPAPESDSGSF) is disordered.

Belongs to the glycosyltransferase 20 family. As to quaternary structure, homotetramer.

The catalysed reaction is ADP-alpha-D-glucose + D-glucose 6-phosphate = alpha,alpha-trehalose 6-phosphate + ADP + H(+). The enzyme catalyses CDP-alpha-D-glucose + D-glucose 6-phosphate = alpha,alpha-trehalose 6-phosphate + CDP + H(+). It catalyses the reaction GDP-alpha-D-glucose + D-glucose 6-phosphate = alpha,alpha-trehalose 6-phosphate + GDP + H(+). It carries out the reaction TDP-alpha-D-glucose + D-glucose 6-phosphate = 5-methyl-UDP + alpha,alpha-trehalose 6-phosphate + H(+). The catalysed reaction is D-glucose 6-phosphate + UDP-alpha-D-glucose = alpha,alpha-trehalose 6-phosphate + UDP + H(+). It participates in glycan biosynthesis; trehalose biosynthesis. Its activity is regulated as follows. Stimulated by the polynucleotide FII (physiological activator), and by chondroitin sulfate (CS) and heparin. Activation by the polyanion is inhibited by high salt concentration as well as by high concentrations of mononucleoside phosphates. In terms of biological role, involved in the production of glycogen and alpha-glucan via the TreS-Pep2 branch involved in the biosynthesis of maltose-1-phosphate (M1P), and probably in the osmoprotection via the biosynthesis of trehalose. Catalyzes the transfer of glucose from UDP-glucose (UDP-Glc) to glucose-6-phosphate (Glc-6-P) to form trehalose-6-phosphate. ADP-Glc, CDP-Glc, GDP-Glc and TDP-Glc are also glucosyl donors, however, when the pyrimidine sugar nucleotides (CDP-Glc, TDP-Glc and UDP-Glc) are used as substrates, there is an absolute requirement for a high molecular weight polyanion for activity. In Mycolicibacterium smegmatis (strain ATCC 700084 / mc(2)155) (Mycobacterium smegmatis), this protein is Trehalose-6-phosphate synthase.